A 362-amino-acid chain; its full sequence is Aminomethyltransferase (362 aa).

Belongs to the GcvT family. In terms of assembly, the glycine cleavage system is composed of four proteins: P, T, L and H.

It catalyses the reaction N(6)-[(R)-S(8)-aminomethyldihydrolipoyl]-L-lysyl-[protein] + (6S)-5,6,7,8-tetrahydrofolate = N(6)-[(R)-dihydrolipoyl]-L-lysyl-[protein] + (6R)-5,10-methylene-5,6,7,8-tetrahydrofolate + NH4(+). Functionally, the glycine cleavage system catalyzes the degradation of glycine. The protein is Aminomethyltransferase of Listeria monocytogenes serotype 4b (strain F2365).